A 293-amino-acid chain; its full sequence is MDLLDAWDYFINEVRKFFKEKGYTEVSTPLLLDFPNLDSNVEPVKVEVLERGENKVKWLHTSPEYSMKKLLSRYKRDIFQITKVFRNNEWGRLHRIEFHMLEWYAVGCDYLYLIEELKQLLNKLFGFKEFEVITVEEAFKRHFGEGIPQEESSMKELLERKGIDFSEDEDWETLFYRAFIEVERHLGFNRPTFLINFPERLCALAKVRNGYAERFELFIKGIELANGWTEETNPEEVRKRLEREAKKRNLPLDEDFIKAHEDMPECAGCSLGIDRLFSLFLGKEELVSEFFRA.

ATP-binding positions include 86–88 (RNN), 223–224 (EL), and glycine 272.

It belongs to the class-II aminoacyl-tRNA synthetase family. EpmA subfamily. Homodimer.

This is Elongation factor P--(R)-beta-lysine ligase homolog (genX) from Aquifex aeolicus (strain VF5).